A 240-amino-acid polypeptide reads, in one-letter code: Pathogenesis-related thaumatin-like protein 3.5 (240 aa).

Positions M1 to A20 are cleaved as a signal peptide. 8 disulfides stabilise this stretch: C31-C237, C79-C89, C94-C100, C145-C227, C150-C210, C158-C173, C177-C186, and C187-C197.

It belongs to the thaumatin family. Strongly expressed in pollen grains. Also present at weak levels in seedling roots, in sapling stems and in developing male strobili.

May be involved in disease resistance. The chain is Pathogenesis-related thaumatin-like protein 3.5 from Cryptomeria japonica (Japanese cedar).